The chain runs to 287 residues: 4-diphosphocytidyl-2-C-methyl-D-erythritol kinase (287 aa).

Lysine 10 is a catalytic residue. ATP is bound at residue proline 94–alanine 104. Aspartate 136 is a catalytic residue.

This sequence belongs to the GHMP kinase family. IspE subfamily.

It carries out the reaction 4-CDP-2-C-methyl-D-erythritol + ATP = 4-CDP-2-C-methyl-D-erythritol 2-phosphate + ADP + H(+). It participates in isoprenoid biosynthesis; isopentenyl diphosphate biosynthesis via DXP pathway; isopentenyl diphosphate from 1-deoxy-D-xylulose 5-phosphate: step 3/6. In terms of biological role, catalyzes the phosphorylation of the position 2 hydroxy group of 4-diphosphocytidyl-2C-methyl-D-erythritol. This chain is 4-diphosphocytidyl-2-C-methyl-D-erythritol kinase, found in Pelotomaculum thermopropionicum (strain DSM 13744 / JCM 10971 / SI).